The following is a 118-amino-acid chain: Basic phospholipase A2 4 (118 aa).

7 cysteine pairs are disulfide-bonded: Cys11–Cys71, Cys27–Cys117, Cys29–Cys45, Cys44–Cys98, Cys51–Cys91, Cys60–Cys84, and Cys78–Cys89. 3 residues coordinate Ca(2+): Tyr28, Gly30, and Gly32. His48 is a catalytic residue. Residue Asp49 participates in Ca(2+) binding. The active site involves Asp92.

It belongs to the phospholipase A2 family. Group I subfamily. D49 sub-subfamily. Monomer. Requires Ca(2+) as cofactor. In terms of tissue distribution, expressed by the venom gland.

It localises to the secreted. The enzyme catalyses a 1,2-diacyl-sn-glycero-3-phosphocholine + H2O = a 1-acyl-sn-glycero-3-phosphocholine + a fatty acid + H(+). Its function is as follows. PLA2 catalyzes the calcium-dependent hydrolysis of the 2-acyl groups in 3-sn-phosphoglycerides. The sequence is that of Basic phospholipase A2 4 from Laticauda semifasciata (Black-banded sea krait).